Here is a 462-residue protein sequence, read N- to C-terminus: UDP-N-acetylmuramoylalanine--D-glutamate ligase (462 aa).

ATP is bound at residue 111-117; the sequence is GTNGKTT.

This sequence belongs to the MurCDEF family.

The protein localises to the cytoplasm. The catalysed reaction is UDP-N-acetyl-alpha-D-muramoyl-L-alanine + D-glutamate + ATP = UDP-N-acetyl-alpha-D-muramoyl-L-alanyl-D-glutamate + ADP + phosphate + H(+). It participates in cell wall biogenesis; peptidoglycan biosynthesis. Functionally, cell wall formation. Catalyzes the addition of glutamate to the nucleotide precursor UDP-N-acetylmuramoyl-L-alanine (UMA). The polypeptide is UDP-N-acetylmuramoylalanine--D-glutamate ligase (Trichodesmium erythraeum (strain IMS101)).